We begin with the raw amino-acid sequence, 504 residues long: Maturase K (504 aa).

This sequence belongs to the intron maturase 2 family. MatK subfamily.

The protein resides in the plastid. Its subcellular location is the chloroplast. In terms of biological role, usually encoded in the trnK tRNA gene intron. Probably assists in splicing its own and other chloroplast group II introns. This Lepidium virginicum (Virginia pepperweed) protein is Maturase K.